Here is a 353-residue protein sequence, read N- to C-terminus: Variable large protein 12 (353 aa).

The signal sequence occupies residues 1 to 18 (MRKRISAIIMTLFMVLAS). Cysteine 19 carries the N-palmitoyl cysteine lipid modification. Cysteine 19 carries the S-diacylglycerol cysteine lipid modification.

The protein belongs to the variable large protein (Vlp) family. Beta subfamily.

It localises to the cell outer membrane. In terms of biological role, the Vlp and Vsp proteins are antigenically distinct proteins, only one vlp or vsp gene is transcriptionally active at any one time. Switching between these genes is a mechanism of host immune response evasion. The polypeptide is Variable large protein 12 (Borrelia hermsii).